Here is a 178-residue protein sequence, read N- to C-terminus: Ribosome maturation factor RimM (178 aa).

Positions 101-178 constitute a PRC barrel domain; that stretch reads DGEYYWYQLQ…EMKVEWDADF (78 aa).

This sequence belongs to the RimM family. As to quaternary structure, binds ribosomal protein uS19.

Its subcellular location is the cytoplasm. In terms of biological role, an accessory protein needed during the final step in the assembly of 30S ribosomal subunit, possibly for assembly of the head region. Essential for efficient processing of 16S rRNA. May be needed both before and after RbfA during the maturation of 16S rRNA. It has affinity for free ribosomal 30S subunits but not for 70S ribosomes. The protein is Ribosome maturation factor RimM of Pseudomonas fluorescens (strain ATCC BAA-477 / NRRL B-23932 / Pf-5).